Reading from the N-terminus, the 201-residue chain is Superoxide dismutase [Mn] (201 aa).

Mn(2+) contacts are provided by histidine 27, histidine 81, aspartate 163, and histidine 167.

This sequence belongs to the iron/manganese superoxide dismutase family. In terms of assembly, homodimer. Requires Mn(2+) as cofactor.

The protein resides in the secreted. It catalyses the reaction 2 superoxide + 2 H(+) = H2O2 + O2. Functionally, destroys superoxide anion radicals which are normally produced within the cells and which are toxic to biological systems. This Streptococcus pyogenes serotype M1 protein is Superoxide dismutase [Mn] (sodA).